The following is a 196-amino-acid chain: Heat shock protein beta-8 (196 aa).

Residues Ser24 and Ser57 each carry the phosphoserine modification. Position 63 is a phosphothreonine; by PKC; in vitro (Thr63). 2 positions are modified to asymmetric dimethylarginine: Arg71 and Arg78. Positions 74-185 constitute a sHSP domain; that stretch reads TATARFGVPA…TFGESSFNNE (112 aa). A disordered region spans residues 176–196; the sequence is TFGESSFNNELPQDSQEVTCT. Residues 177–196 show a composition bias toward polar residues; it reads FGESSFNNELPQDSQEVTCT.

It belongs to the small heat shock protein (HSP20) family. Monomer. Forms a ternary complex with BAG3 and HSPA1A. Component of the chaperone-assisted selective autophagy (CASA) complex consisting of BAG3, HSPA8/HSC70, HSPB8 and STUB1/CHIP. Interacts with HSPB1. Interacts with DNAJB6. Interacts with BAG3. As to expression, predominantly expressed in skeletal muscle and heart.

It is found in the cytoplasm. It localises to the nucleus. Its function is as follows. Involved in the chaperone-assisted selective autophagy (CASA), a crucial process for protein quality control, particularly in mechanical strained cells and tissues such as muscle. Displays temperature-dependent chaperone activity. The polypeptide is Heat shock protein beta-8 (HSPB8) (Homo sapiens (Human)).